An 856-amino-acid chain; its full sequence is Nuclear valosin-containing protein-like (856 aa).

Residues 1 to 220 (MKPRPAGFVD…SLLESDMKRK (220 aa)) are interaction with RPL5. The Nucleolar localization signal signature appears at 49-52 (RRKR). N6-acetyllysine is present on Lys-70. Residues 84–175 (AKRARQGEED…AKDSEGGWFI (92 aa)) form a disordered region. A Nuclear localization signal motif is present at residues 85-88 (KRAR). Positions 92–111 (EDNEYTESYSDDDSSMEDYP) are enriched in acidic residues. 2 stretches are compositionally biased toward polar residues: residues 114–124 (QSANHMNSSLL) and 133–158 (DSVSNTPEMEQRETTSSTPRISSKTG). Phosphoserine is present on Ser-134. Thr-138 carries the post-translational modification Phosphothreonine. Lys-156 is subject to N6-acetyllysine. Position 191 is a phosphoserine (Ser-191). Residues 197–236 (PKKPITEIQDSKDSSLLESDMKRKGKLKNKGSKRKKEDLQ) are disordered. Basic and acidic residues predominate over residues 205-218 (QDSKDSSLLESDMK). Lys-208 participates in a covalent cross-link: Glycyl lysine isopeptide (Lys-Gly) (interchain with G-Cter in SUMO2). A phosphoserine mark is found at Ser-211 and Ser-215. The Nuclear localization signal signature appears at 218-232 (KRKGKLKNKGSKRKK). The segment covering 219-230 (RKGKLKNKGSKR) has biased composition (basic residues). Positions 267–474 (VGGNDMTLKE…LTPGFVGADL (208 aa)) are interaction with WDR74. 305-312 (GPPGCGKT) lines the ATP pocket. The segment at 496–523 (QQKKNPEMEDLPSKGVQEERLGTEPTSE) is disordered. 622–629 (GPPGCGKT) is an ATP binding site.

The protein belongs to the AAA ATPase family. As to quaternary structure, interacts with NCL/nucleolin. Isoform 1 and isoform 2 interact with TERT and isoform 1 exhibits a higher binding affinity for TERT compared to isoform 2. Isoform 1 interacts with MTREX in an ATP-dependent manner; the interaction is required to associate NVL with nuclear RNA exosome. Isoform 1 interacts with RPL5 in an ATP-dependent manner. Interacts with WDR74 (through WDR repeats); the interaction is independent of RNA or pre-60S ribosome particles. Widely expressed. Highest level of expression in heart, placenta, skeletal muscle, pancreas and retina.

It is found in the nucleus. The protein resides in the nucleoplasm. The protein localises to the nucleolus. In terms of biological role, participates in the assembly of the telomerase holoenzyme and effecting of telomerase activity via its interaction with TERT. Involved in both early and late stages of the pre-rRNA processing pathways. Spatiotemporally regulates 60S ribosomal subunit biogenesis in the nucleolus. Catalyzes the release of specific assembly factors, such as WDR74, from pre-60S ribosomal particles through the ATPase activity. In Homo sapiens (Human), this protein is Nuclear valosin-containing protein-like.